Consider the following 779-residue polypeptide: Endonuclease MutS2 (779 aa).

328–335 (GPNTGGKT) is a binding site for ATP. Positions 704–779 (LDLRGKRYEE…GSGATIVTLG (76 aa)) constitute a Smr domain.

The protein belongs to the DNA mismatch repair MutS family. MutS2 subfamily. In terms of assembly, homodimer. Binds to stalled ribosomes, contacting rRNA.

Endonuclease that is involved in the suppression of homologous recombination and thus may have a key role in the control of bacterial genetic diversity. In terms of biological role, acts as a ribosome collision sensor, splitting the ribosome into its 2 subunits. Detects stalled/collided 70S ribosomes which it binds and splits by an ATP-hydrolysis driven conformational change. Acts upstream of the ribosome quality control system (RQC), a ribosome-associated complex that mediates the extraction of incompletely synthesized nascent chains from stalled ribosomes and their subsequent degradation. Probably generates substrates for RQC. This chain is Endonuclease MutS2, found in Streptococcus agalactiae serotype III (strain NEM316).